We begin with the raw amino-acid sequence, 342 residues long: Phosphate acyltransferase (342 aa).

It belongs to the PlsX family. In terms of assembly, homodimer. Probably interacts with PlsY.

It is found in the cytoplasm. The catalysed reaction is a fatty acyl-[ACP] + phosphate = an acyl phosphate + holo-[ACP]. It functions in the pathway lipid metabolism; phospholipid metabolism. Functionally, catalyzes the reversible formation of acyl-phosphate (acyl-PO(4)) from acyl-[acyl-carrier-protein] (acyl-ACP). This enzyme utilizes acyl-ACP as fatty acyl donor, but not acyl-CoA. This Alkalilimnicola ehrlichii (strain ATCC BAA-1101 / DSM 17681 / MLHE-1) protein is Phosphate acyltransferase.